Reading from the N-terminus, the 316-residue chain is Solute carrier family 25 member 32 (316 aa).

Solcar repeat units lie at residues 20-109, 118-209, and 222-306; these read HVRY…IKSY, LEPL…LKLK, and LSTA…VSHF. The next 6 membrane-spanning stretches (helical) occupy residues 26 to 46, 89 to 106, 123 to 143, 185 to 203, 227 to 243, and 281 to 300; these read LVAG…LDLV, VWGA…YNAI, YLVS…PLWV, GFVP…FMAY, YISV…AATY, and GIAP…FVVY.

This sequence belongs to the mitochondrial carrier (TC 2.A.29) family.

It localises to the mitochondrion inner membrane. It catalyses the reaction FAD(in) = FAD(out). In terms of biological role, facilitates flavin adenine dinucleotide (FAD) translocation across the mitochondrial inner membrane into the mitochondrial matrix where it acts as a redox cofactor to assist flavoenzyme activities in fundamental metabolic processes including fatty acid beta-oxidation, amino acid and choline metabolism as well as mitochondrial electron transportation. In particular, provides FAD to DLD dehydrogenase of the glycine cleavage system, part of mitochondrial one-carbon metabolic pathway involved in neural tube closure in early embryogenesis. In Mus musculus (Mouse), this protein is Solute carrier family 25 member 32.